The chain runs to 346 residues: Phospholipase A1 (346 aa).

The first 26 residues, methionine 1–alanine 26, serve as a signal peptide directing secretion. A propeptide spanning residues glutamate 27–lysine 37 is cleaved from the precursor. 2 N-linked (GlcNAc...) asparagine glycosylation sites follow: asparagine 44 and asparagine 72. Catalysis depends on serine 167, which acts as the Nucleophile. The N-linked (GlcNAc...) asparagine glycan is linked to asparagine 185. Catalysis depends on charge relay system residues aspartate 195 and histidine 258.

It belongs to the AB hydrolase superfamily. Lipase family. Post-translationally, contains six disulfide bonds. In terms of processing, N-glycosylated; contains mannose. Expressed by the venom gland.

The protein localises to the secreted. It carries out the reaction a 1,2-diacyl-sn-glycero-3-phosphocholine + H2O = a 2-acyl-sn-glycero-3-phosphocholine + a fatty acid + H(+). In terms of biological role, catalyzes the hydrolysis of phosphatidylcholine with phospholipase A1 activity. Induces hemolytic activity. Acts as an allergen. The chain is Phospholipase A1 from Solenopsis invicta (Red imported fire ant).